We begin with the raw amino-acid sequence, 391 residues long: Cdc42 effector protein 1 (391 aa).

A phosphoserine mark is found at Ser-19 and Ser-27. Thr-34 bears the Phosphothreonine mark. A CRIB domain is found at 38-52; that stretch reads ISHPLGDFRHTMHVG. Residue Ser-39 is modified to Phosphoserine. Omega-N-methylarginine is present on Arg-53. Ser-65, Ser-73, Ser-77, Ser-101, Ser-113, Ser-121, and Ser-139 each carry phosphoserine. The interval 163–189 is disordered; it reads ISRLPRSEKPHDRDRDGSFPSEPGLRR. Positions 167-179 are enriched in basic and acidic residues; that stretch reads PRSEKPHDRDRDG. Residues Ser-180, Ser-190, Ser-192, and Ser-195 each carry the phosphoserine modification. 8 consecutive repeat copies span residues 220-226, 227-233, 234-240, 241-247, 248-254, 255-261, 262-268, and 269-275. Positions 220–275 are 8 X 7 AA tandem repeats of [PT]-[AT]-A-[ENT]-[PT]-[PTS]-[AG]; the sequence is PAAETPAPAANPPAPTANPTGPAANPPATTANPPAPAANPSAPAATPTGPAANPPA. A disordered region spans residues 221-338; that stretch reads AAETPAPAAN…HHYPEMDARQ (118 aa). Residues 236–270 show a composition bias toward low complexity; sequence ANPTGPAANPPATTANPPAPAANPSAPAATPTGPA. Position 303 is a phosphoserine (Ser-303). The segment covering 327-338 has biased composition (basic and acidic residues); the sequence is GGHHYPEMDARQ. Phosphoserine is present on residues Ser-350 and Ser-353. Positions 354–391 are disordered; sequence LDEEWRAPQAGSRTPVPSTVQANTFEFADAEEDDEVKV. Positions 364-377 are enriched in polar residues; the sequence is GSRTPVPSTVQANT. Residues 381 to 391 are compositionally biased toward acidic residues; that stretch reads ADAEEDDEVKV.

This sequence belongs to the BORG/CEP family. Interacts with RHOQ and CDC42, in a GTP-dependent manner. As to expression, endothelial and bone marrow stromal cells.

Its subcellular location is the endomembrane system. The protein resides in the cytoplasm. It localises to the cytoskeleton. Functionally, probably involved in the organization of the actin cytoskeleton. Induced membrane extensions in fibroblasts. This Homo sapiens (Human) protein is Cdc42 effector protein 1 (CDC42EP1).